The following is a 281-amino-acid chain: CDAN1-interacting nuclease 1 (281 aa).

Its subcellular location is the nucleus. It localises to the cytoplasm. Plays a role in erythroid cell differentiation. The protein is CDAN1-interacting nuclease 1 (CDIN1) of Bos taurus (Bovine).